We begin with the raw amino-acid sequence, 351 residues long: Translation initiation factor eIF2B subunit beta (351 aa).

This sequence belongs to the eIF-2B alpha/beta/delta subunits family. In terms of assembly, component of the translation initiation factor 2B (eIF2B) complex which is a heterodecamer of two sets of five different subunits: alpha, beta, gamma, delta and epsilon. Subunits alpha, beta and delta comprise a regulatory subcomplex and subunits epsilon and gamma comprise a catalytic subcomplex. Within the complex, the hexameric regulatory complex resides at the center, with the two heterodimeric catalytic subcomplexes bound on opposite sides.

The protein resides in the cytoplasm. It localises to the cytosol. Its activity is regulated as follows. Activated by the chemical integrated stress response (ISR) inhibitor ISRIB which stimulates guanine nucleotide exchange factor activity for both phosphorylated and unphosphorylated eIF2. Acts as a component of the translation initiation factor 2B (eIF2B) complex, which catalyzes the exchange of GDP for GTP on eukaryotic initiation factor 2 (eIF2) gamma subunit. Its guanine nucleotide exchange factor activity is repressed when bound to eIF2 complex phosphorylated on the alpha subunit, thereby limiting the amount of methionyl-initiator methionine tRNA available to the ribosome and consequently global translation is repressed. This is Translation initiation factor eIF2B subunit beta (EIF2B2) from Oryctolagus cuniculus (Rabbit).